The sequence spans 74 residues: Exodeoxyribonuclease 7 small subunit (74 aa).

The protein belongs to the XseB family. In terms of assembly, heterooligomer composed of large and small subunits.

The protein localises to the cytoplasm. The catalysed reaction is Exonucleolytic cleavage in either 5'- to 3'- or 3'- to 5'-direction to yield nucleoside 5'-phosphates.. In terms of biological role, bidirectionally degrades single-stranded DNA into large acid-insoluble oligonucleotides, which are then degraded further into small acid-soluble oligonucleotides. In Neisseria meningitidis serogroup A / serotype 4A (strain DSM 15465 / Z2491), this protein is Exodeoxyribonuclease 7 small subunit.